The following is an 89-amino-acid chain: MSITAERKAEVIKTSATKAGDTGSPEVQVAILSERITNLTAHFKTHTKDNHSRRGLLKLVSTRRSLLDYIKKKDEARYKALLEKHNIRR.

Basic and acidic residues predominate over residues 1-11 (MSITAERKAEV). The tract at residues 1–24 (MSITAERKAEVIKTSATKAGDTGS) is disordered.

Belongs to the universal ribosomal protein uS15 family. In terms of assembly, part of the 30S ribosomal subunit. Forms a bridge to the 50S subunit in the 70S ribosome, contacting the 23S rRNA.

Functionally, one of the primary rRNA binding proteins, it binds directly to 16S rRNA where it helps nucleate assembly of the platform of the 30S subunit by binding and bridging several RNA helices of the 16S rRNA. Its function is as follows. Forms an intersubunit bridge (bridge B4) with the 23S rRNA of the 50S subunit in the ribosome. The sequence is that of Small ribosomal subunit protein uS15 from Rhodopseudomonas palustris (strain TIE-1).